The following is a 674-amino-acid chain: Sodium/myo-inositol cotransporter 2 (674 aa).

The Extracellular portion of the chain corresponds to M1–E25. A helical transmembrane segment spans residues A26–S46. Over T47–K56 the chain is Cytoplasmic. Residues G57–S77 form a helical membrane-spanning segment. The Extracellular segment spans residues N78–E102. The chain crosses the membrane as a helical span at residues L103–G123. Residues Q124–R140 are Cytoplasmic-facing. A helical transmembrane segment spans residues I141–D161. Residues M162 to A180 lie on the Extracellular side of the membrane. A helical membrane pass occupies residues I181–I201. Topologically, residues Y202–T208 are cytoplasmic. The helical transmembrane segment at L209–L229 threads the bilayer. Topologically, residues E230 to P272 are extracellular. A helical transmembrane segment spans residues G273 to V293. At Q294–G308 the chain is on the cytoplasmic side. The helical transmembrane segment at S309 to V329 threads the bilayer. At S330–R374 the chain is on the extracellular side. The chain crosses the membrane as a helical span at residues G375–S397. The Cytoplasmic segment spans residues T398 to M418. The chain crosses the membrane as a helical span at residues I419–V439. Residues Q440–Q446 are Extracellular-facing. Residues L447 to I467 form a helical membrane-spanning segment. Topologically, residues M468 to G479 are cytoplasmic. A helical membrane pass occupies residues A480–I500. Over Y501–Y521 the chain is Extracellular. The chain crosses the membrane as a helical span at residues L522–F542. The Cytoplasmic portion of the chain corresponds to T543–T653. The segment at E567–G589 is disordered. The segment covering T578–G589 has biased composition (polar residues). A helical membrane pass occupies residues L654–A674.

The protein belongs to the sodium:solute symporter (SSF) (TC 2.A.21) family.

It localises to the membrane. Its subcellular location is the apical cell membrane. It carries out the reaction myo-inositol(out) + 2 Na(+)(out) = myo-inositol(in) + 2 Na(+)(in). The enzyme catalyses 1D-chiro-inositol(out) + 2 Na(+)(out) = 1D-chiro-inositol(in) + 2 Na(+)(in). It catalyses the reaction D-glucose(out) + 2 Na(+)(out) = D-glucose(in) + 2 Na(+)(in). The catalysed reaction is D-xylose(out) + 2 Na(+)(out) = D-xylose(in) + 2 Na(+)(in). MI transport activity inhibited by D-chiro-inositol (DCI), phlorizin (Pz) and sodium (Na(+)). Insulin increases D-chiro-inositol uptake. In terms of biological role, involved in the sodium-dependent cotransport of myo-inositol (MI) with a Na(+):MI stoichiometry of 2:1. Exclusively responsible for apical MI transport and absorption in intestine. Can also transport D-chiro-inositol (DCI) but not L-fucose. Exhibits stereospecific cotransport of both D-glucose and D-xylose. May induce apoptosis through the TNF-alpha, PDCD1 pathway. May play a role in the regulation of MI concentration in serum, involving reabsorption in at least the proximal tubule of the kidney. This chain is Sodium/myo-inositol cotransporter 2, found in Bos taurus (Bovine).